Consider the following 502-residue polypeptide: Glycerol kinase (502 aa).

T14 lines the ADP pocket. 3 residues coordinate ATP: T14, T15, and S16. T14 is a binding site for sn-glycerol 3-phosphate. Residue R18 participates in ADP binding. Sn-glycerol 3-phosphate contacts are provided by R84, E85, and Y136. Residues R84, E85, and Y136 each coordinate glycerol. H232 carries the phosphohistidine; by HPr modification. D246 provides a ligand contact to sn-glycerol 3-phosphate. Glycerol contacts are provided by D246 and Q247. Residues T268 and G311 each coordinate ADP. Residues T268, G311, Q315, and G412 each coordinate ATP. 2 residues coordinate ADP: G412 and N416.

This sequence belongs to the FGGY kinase family. In terms of assembly, homotetramer and homodimer (in equilibrium). Post-translationally, the phosphoenolpyruvate-dependent sugar phosphotransferase system (PTS), including enzyme I, and histidine-containing protein (HPr) are required for the phosphorylation, which leads to the activation of the enzyme.

The enzyme catalyses glycerol + ATP = sn-glycerol 3-phosphate + ADP + H(+). Its pathway is polyol metabolism; glycerol degradation via glycerol kinase pathway; sn-glycerol 3-phosphate from glycerol: step 1/1. With respect to regulation, activated by phosphorylation and inhibited by fructose 1,6-bisphosphate (FBP). In terms of biological role, key enzyme in the regulation of glycerol uptake and metabolism. Catalyzes the phosphorylation of glycerol to yield sn-glycerol 3-phosphate. In Streptococcus pneumoniae (strain ATCC 700669 / Spain 23F-1), this protein is Glycerol kinase.